We begin with the raw amino-acid sequence, 166 residues long: Tetranectin-like protein (166 aa).

Cystine bridges form between cysteine 37/cysteine 47, cysteine 64/cysteine 160, and cysteine 136/cysteine 152. The 119-residue stretch at 43 to 161 (IHKKCYLASR…CRSEKRYICE (119 aa)) folds into the C-type lectin domain.

This Carcharhinus perezii (Reef shark) protein is Tetranectin-like protein.